The primary structure comprises 1118 residues: uncharacterized protein (1118 aa).

Disordered stretches follow at residues 1-69 (MESG…NGED), 1044-1071 (PKSV…EKID), and 1090-1118 (IRPT…SFEL). Over residues 13 to 34 (DMVEEDNDEDSFEEPACEDSFD) the composition is skewed to acidic residues. The span at 35–60 (SQEASSKANEPQNDSFDEPIQSSVSK) shows a compositional bias: polar residues. Positions 1107 to 1118 (EDSDDLEDSFEL) are enriched in acidic residues.

This is an uncharacterized protein from Caenorhabditis elegans.